The primary structure comprises 142 residues: MKTFMANESTIQRKWYVVDAEGKTLGRLATVVASVLKGKHKPTYTPHVDSGDYVIVINAEKIKLTGNKWNDKIYYKHSGYESGLTETPAKELVVKKPTALVEKAVKGMIPHTSLGRDMFRKLFVYAGPEHKHQAQQPESLEV.

The protein belongs to the universal ribosomal protein uL13 family. In terms of assembly, part of the 50S ribosomal subunit.

This protein is one of the early assembly proteins of the 50S ribosomal subunit, although it is not seen to bind rRNA by itself. It is important during the early stages of 50S assembly. The chain is Large ribosomal subunit protein uL13 from Acholeplasma laidlawii (strain PG-8A).